Here is a 338-residue protein sequence, read N- to C-terminus: Phenylalanine--tRNA ligase alpha subunit (338 aa).

E253 lines the Mg(2+) pocket.

It belongs to the class-II aminoacyl-tRNA synthetase family. Phe-tRNA synthetase alpha subunit type 1 subfamily. In terms of assembly, tetramer of two alpha and two beta subunits. Mg(2+) is required as a cofactor.

The protein resides in the cytoplasm. It catalyses the reaction tRNA(Phe) + L-phenylalanine + ATP = L-phenylalanyl-tRNA(Phe) + AMP + diphosphate + H(+). The protein is Phenylalanine--tRNA ligase alpha subunit of Geotalea daltonii (strain DSM 22248 / JCM 15807 / FRC-32) (Geobacter daltonii).